We begin with the raw amino-acid sequence, 679 residues long: Membrane-spanning 4-domains subfamily A member 14 (679 aa).

Transmembrane regions (helical) follow at residues 50 to 70, 76 to 96, 110 to 130, and 141 to 161; these read ILLALIIVGFGTIFALNYIGF, LVVLTGYPFWGALIFILTGYL, VTGMNVISSLVAITGITFTIL, and MPSFEEICVFSRTLFIVLFFL. Disordered regions lie at residues 218–259, 331–363, 469–491, and 505–633; these read VSQP…EKKP, SEQTMPSKSTSSHVKQSSNLTANDLPPQGILSQ, KEWKSEEELHRRKSSRRHSLNQQ, and VQAK…QAQV. A compositionally biased stretch (basic and acidic residues) spans 224–234; it reads KGREFVPDEQK. Over residues 337 to 348 the composition is skewed to low complexity; the sequence is SKSTSSHVKQSS. A compositionally biased stretch (basic and acidic residues) spans 469–478; the sequence is KEWKSEEELH. Composition is skewed to polar residues over residues 519 to 535 and 550 to 563; these read DQQSKGWQSPKQKSLDQ and KQAQLNQTKEQLPD. Residues 580 to 601 are compositionally biased toward basic and acidic residues; that stretch reads QSKDGQVKDQQTDKEQNSKKQT. Positions 619-632 are enriched in polar residues; the sequence is GQFQNVQAEGQQAQ.

It belongs to the MS4A family.

Its subcellular location is the membrane. In terms of biological role, may be involved in signal transduction as a component of a multimeric receptor complex. This chain is Membrane-spanning 4-domains subfamily A member 14 (MS4A14), found in Homo sapiens (Human).